A 229-amino-acid polypeptide reads, in one-letter code: GTP cyclohydrolase 1 (229 aa).

Positions 1-26 are disordered; sequence MDAKIKPIRGTNPAEGRPEFQPAELE. The Zn(2+) site is built by cysteine 118, histidine 121, and cysteine 189.

It belongs to the GTP cyclohydrolase I family. As to quaternary structure, toroid-shaped homodecamer, composed of two pentamers of five dimers.

It carries out the reaction GTP + H2O = 7,8-dihydroneopterin 3'-triphosphate + formate + H(+). It participates in cofactor biosynthesis; 7,8-dihydroneopterin triphosphate biosynthesis; 7,8-dihydroneopterin triphosphate from GTP: step 1/1. This chain is GTP cyclohydrolase 1, found in Rhodopseudomonas palustris (strain ATCC BAA-98 / CGA009).